The following is a 474-amino-acid chain: UDP-N-acetylmuramate--L-alanine ligase (474 aa).

108–114 (GTHGKTT) serves as a coordination point for ATP.

Belongs to the MurCDEF family.

Its subcellular location is the cytoplasm. The enzyme catalyses UDP-N-acetyl-alpha-D-muramate + L-alanine + ATP = UDP-N-acetyl-alpha-D-muramoyl-L-alanine + ADP + phosphate + H(+). The protein operates within cell wall biogenesis; peptidoglycan biosynthesis. Functionally, cell wall formation. This Chloroflexus aggregans (strain MD-66 / DSM 9485) protein is UDP-N-acetylmuramate--L-alanine ligase.